The chain runs to 235 residues: Protein mxl-3 (235 aa).

Residues Glu18 to Arg49 are disordered. Positions Asp47–Arg60 are basic motif. The bHLH domain maps to Asp47 to Met98. The interval Asp61–Met98 is helix-loop-helix motif.

Belongs to the MAX family. As to quaternary structure, may form homodimer. Interacts (via N-terminus) with skn-1 isoforms a and c. In terms of tissue distribution, expressed in the intestine and in the AWC sensory neurons.

The protein resides in the nucleus. It is found in the cytoplasm. In terms of biological role, transcription factor which regulates the expression of genes involved in lipid metabolism in response to nutrient availability. Binds to the E-box motif 5'-CACGTG-3'. Under well-fed conditions, binds to the promoter and represses the expression of lipase genes lipl-1, lipl-2, lipl-3 and to a lesser extent lipl-5, thereby preventing lipolysis. In response to a high-glucose diet, promotes fatty acid synthesis, elongation and desaturation by up-regulating transcription factor sbp-1 expression. Under well-fed conditions, acts remotely in the intestine to up-regulate the expression of chemoreceptor srh-234 gene in the ADL sensory neuron, possibly by regulating the insulin signaling pathway. The protein is Protein mxl-3 of Caenorhabditis elegans.